The primary structure comprises 475 residues: Aminodeoxychorismate synthase component 1 (475 aa).

Belongs to the anthranilate synthase component I family. As to quaternary structure, monomer. Heterodimer consisting of two non-identical subunits: a glutamine amidotransferase subunit (PabA) and a aminodeoxychorismate synthase subunit (PabB). Mg(2+) serves as cofactor.

It catalyses the reaction chorismate + L-glutamine = 4-amino-4-deoxychorismate + L-glutamate. The protein operates within cofactor biosynthesis; tetrahydrofolate biosynthesis; 4-aminobenzoate from chorismate: step 1/2. Part of a heterodimeric complex that catalyzes the two-step biosynthesis of 4-amino-4-deoxychorismate (ADC), a precursor of p-aminobenzoate (PABA) and tetrahydrofolate. In the first step, a glutamine amidotransferase (PabA) generates ammonia as a substrate that, along with chorismate, is used in the second step, catalyzed by aminodeoxychorismate synthase (PabB) to produce ADC. The sequence is that of Aminodeoxychorismate synthase component 1 (pabB) from Streptomyces lividans.